Consider the following 545-residue polypeptide: ATP synthase subunit alpha, mitochondrial (545 aa).

The transit peptide at 1 to 35 (MLARTAAIRSLSRTLINSTKAARPAAAALASTRRL) directs the protein to the mitochondrion. 2 positions are modified to phosphoserine: serine 57 and serine 178. 206–213 (GDRQTGKT) is an ATP binding site.

It belongs to the ATPase alpha/beta chains family. As to quaternary structure, F-type ATPases have 2 components, CF(1) - the catalytic core - and CF(0) - the membrane proton channel. CF(1) has five subunits: alpha(3), beta(3), gamma(1), delta(1), epsilon(1). CF(0) has three main subunits: a, b and c.

The protein localises to the mitochondrion inner membrane. In terms of biological role, mitochondrial membrane ATP synthase (F(1)F(0) ATP synthase or Complex V) produces ATP from ADP in the presence of a proton gradient across the membrane which is generated by electron transport complexes of the respiratory chain. F-type ATPases consist of two structural domains, F(1) - containing the extramembraneous catalytic core, and F(0) - containing the membrane proton channel, linked together by a central stalk and a peripheral stalk. During catalysis, ATP synthesis in the catalytic domain of F(1) is coupled via a rotary mechanism of the central stalk subunits to proton translocation. Subunits alpha and beta form the catalytic core in F(1). Rotation of the central stalk against the surrounding alpha(3)beta(3) subunits leads to hydrolysis of ATP in three separate catalytic sites on the beta subunits. Subunit alpha does not bear the catalytic high-affinity ATP-binding sites. The sequence is that of ATP synthase subunit alpha, mitochondrial (ATP1) from Saccharomyces cerevisiae (strain ATCC 204508 / S288c) (Baker's yeast).